Here is a 251-residue protein sequence, read N- to C-terminus: 5'-nucleotidase SurE (251 aa).

A divalent metal cation contacts are provided by Asp8, Asp9, Ser39, and Asn95.

The protein belongs to the SurE nucleotidase family. The cofactor is a divalent metal cation.

It localises to the cytoplasm. The enzyme catalyses a ribonucleoside 5'-phosphate + H2O = a ribonucleoside + phosphate. Nucleotidase that shows phosphatase activity on nucleoside 5'-monophosphates. The protein is 5'-nucleotidase SurE of Clostridium botulinum (strain Alaska E43 / Type E3).